The following is a 432-amino-acid chain: Ornithine decarboxylase 1A, chloroplastic (432 aa).

N6-(pyridoxal phosphate)lysine is present on K95. Pyridoxal 5'-phosphate is bound by residues S227, G265, and 298 to 301 (EPGR). Substrate is bound at residue 341–342 (YD). C377 (proton donor; shared with dimeric partner) is an active-site residue. Residue D378 participates in substrate binding. Y406 lines the pyridoxal 5'-phosphate pocket.

It belongs to the Orn/Lys/Arg decarboxylase class-II family. As to quaternary structure, homodimer. Only the dimer is catalytically active, as the active sites are constructed of residues from both monomers. It depends on pyridoxal 5'-phosphate as a cofactor.

The protein resides in the plastid. Its subcellular location is the chloroplast. The enzyme catalyses L-ornithine + H(+) = putrescine + CO2. It functions in the pathway alkaloid biosynthesis; nicotine biosynthesis. It participates in amine and polyamine biosynthesis; putrescine biosynthesis via L-ornithine pathway; putrescine from L-ornithine: step 1/1. Involved in the biosynthesis of pyridine alkaloid natural products, leading mainly to the production of anabasine, anatabine, nicotine and nornicotine, effective deterrents against herbivores with antiparasitic and pesticide properties (neurotoxins); nornicotine serves as the precursor in the synthesis of the carcinogen compound N'-nitrosonornicotine (NNN). Catalyzes the first and rate-limiting step of polyamine biosynthesis that converts ornithine into putrescine, which is the precursor for the polyamines, spermidine and spermine. Polyamines are essential for cell proliferation and are implicated in cellular processes, ranging from DNA replication to apoptosis. The chain is Ornithine decarboxylase 1A, chloroplastic from Nicotiana tabacum (Common tobacco).